The following is a 996-amino-acid chain: MATGLTPPPQPIKRPPKAVTWIIGIIALLVLVTPLTVGFYTDWLWFGEVDYRGVFSTVIVTRIILFIVFALLAGFVTWLAGYFTIRLRPDDLTAFDAESPVFQYRQMIENSLRRILIIVPIFVGLLGGLVGQRSWQTVQLFLNREPFGVEDQQFGMDYGFYAFTLPMLRLITSSLSTLLVVAFIIALVGHYLLGGIRPGNQMTGQKAFISRGARAQLAVTAGLWMLVRVATYWLERYDLLTRENATFTGAGYTDINAHLPAKIILMVISIIVAVAFFSAIFLRDLRIPGLAVVLLVLSSVVVGAVWPLMLERFSVQPNRAEKESEYISRNIESTRFAYGITDDEVTYIENWGAGGATNAEVAADEATISNIRLLDPQILSPTFTQQQQLRNFYGFPEQLAMDRYEVDGELRDFVVAARELDPNSLQQNQQDWINRHTVYTHGNGFIAAQANQVDEVARDVGSTRGGYPVYTVSDLQTNARAAESEDAEELGIMVEQPRIYYGPLIASAADGKDYAIVGDTGDGPVEYDTDSTSYTYDGEGGVGIGNLFNRAAFALRYQEMNMILSDRVGSESKILFERDPRTRVEKVAPWLTTDSKSYPAVIDGSIKWIVDGYTTLSSLPYATRTSLTEATLDSVVVDNFQQPLLTEEVGYIRNSVKAVVDAYDGTVELYEFDSEDPVLKAWRGVFPDVVQPESEISNELRDHLRYPEDMFKVQREMLSRYHVEDAGTFFTNDAFWSVPNDPTAPEGRQEMKQPPYYVVAADPDTGESSFQLITPFRGLQREFLSAHMTASSDPDNFGKITVRVLPTGAVTQGPKQAQDAMMSSDQVAQDQTLWRGSNDLFNGNLLTLPVGGGEILYVEPIYSQRRDQESAFPKLLRMLVFYKGQVGYAPTIAEALSQVGIDPAAAQDIEVVEEDGTVTVPDVNATEDADATTDGEDETPAAPAAPAGSEAEGIEAINEALRNLEAARDGSFEEYGRALDALDRAVESYQGAGTAE.

Transmembrane regions (helical) follow at residues 19-39 (VTWI…TVGF), 63-83 (IILF…AGYF), 115-135 (ILII…QRSW), 176-196 (STLL…LGGI), 212-234 (GARA…TYWL), 262-282 (KIIL…AIFL), and 290-310 (LAVV…PLML). Residues 920 to 950 (VPDVNATEDADATTDGEDETPAAPAAPAGSE) form a disordered region. Residues 925–939 (ATEDADATTDGEDET) are compositionally biased toward acidic residues. The span at 940-950 (PAAPAAPAGSE) shows a compositional bias: low complexity.

It belongs to the UPF0182 family.

It localises to the cell membrane. The protein is UPF0182 protein CE0802 of Corynebacterium efficiens (strain DSM 44549 / YS-314 / AJ 12310 / JCM 11189 / NBRC 100395).